A 508-amino-acid polypeptide reads, in one-letter code: Mitochondrial distribution and morphology protein 10 (508 aa).

The tract at residues 160–195 (PAHPTSTRPTPPQTPPSHTRQPSEPSTPAPSPTPGN) is disordered.

It belongs to the MDM10 family. In terms of assembly, component of the ER-mitochondria encounter structure (ERMES) or MDM complex, composed of MMM1, MDM10, MDM12 and MDM34. Associates with the mitochondrial outer membrane sorting assembly machinery SAM(core) complex.

It localises to the mitochondrion outer membrane. In terms of biological role, component of the ERMES/MDM complex, which serves as a molecular tether to connect the endoplasmic reticulum and mitochondria. Components of this complex are involved in the control of mitochondrial shape and protein biogenesis and may function in phospholipid exchange. MDM10 is involved in the late assembly steps of the general translocase of the mitochondrial outer membrane (TOM complex). Functions in the TOM40-specific route of the assembly of outer membrane beta-barrel proteins, including the association of TOM40 with the receptor TOM22 and small TOM proteins. Can associate with the SAM(core) complex as well as the MDM12-MMM1 complex, both involved in late steps of the major beta-barrel assembly pathway, that is responsible for biogenesis of all outer membrane beta-barrel proteins. May act as a switch that shuttles between both complexes and channels precursor proteins into the TOM40-specific pathway. Plays a role in mitochondrial morphology and in the inheritance of mitochondria. This chain is Mitochondrial distribution and morphology protein 10, found in Cryptococcus neoformans var. neoformans serotype D (strain B-3501A) (Filobasidiella neoformans).